A 334-amino-acid polypeptide reads, in one-letter code: Tryptophan--tRNA ligase (334 aa).

ATP contacts are provided by residues 12–14 and 20–21; these read QPS and GN. A 'HIGH' region motif is present at residues 13–21; the sequence is PSGIPTLGN. Asp136 lines the L-tryptophan pocket. Residues 148 to 150, Ile187, and 196 to 200 each bind ATP; these read GKD and KMSKS. The short motif at 196 to 200 is the 'KMSKS' region element; the sequence is KMSKS.

Belongs to the class-I aminoacyl-tRNA synthetase family. In terms of assembly, homodimer.

It is found in the cytoplasm. It carries out the reaction tRNA(Trp) + L-tryptophan + ATP = L-tryptophyl-tRNA(Trp) + AMP + diphosphate + H(+). Its function is as follows. Catalyzes the attachment of tryptophan to tRNA(Trp). The protein is Tryptophan--tRNA ligase of Wigglesworthia glossinidia brevipalpis.